Consider the following 240-residue polypeptide: 1-acyl-sn-glycerol-3-phosphate acyltransferase (240 aa).

The HXXXXD motif motif lies at 73-78; that stretch reads HQNNYD.

It belongs to the 1-acyl-sn-glycerol-3-phosphate acyltransferase family.

Its subcellular location is the cell inner membrane. It catalyses the reaction a 1-acyl-sn-glycero-3-phosphate + an acyl-CoA = a 1,2-diacyl-sn-glycero-3-phosphate + CoA. Its pathway is phospholipid metabolism; CDP-diacylglycerol biosynthesis; CDP-diacylglycerol from sn-glycerol 3-phosphate: step 2/3. Functionally, converts lysophosphatidic acid (LPA) into phosphatidic acid by incorporating acyl moiety at the 2 position. This Haemophilus influenzae (strain ATCC 51907 / DSM 11121 / KW20 / Rd) protein is 1-acyl-sn-glycerol-3-phosphate acyltransferase (plsC).